Consider the following 1220-residue polypeptide: Limbin (1220 aa).

A signal peptide spans 1-29 (MGATGPTGAGGRATWVLAGNILAAALVLG). Over 30-210 (SGPRALPPSF…VLPNHGLHAA (181 aa)) the chain is Extracellular. The segment at 38-59 (SFPALGPGSPSRPGPAGPWASS) is disordered. N-linked (GlcNAc...) asparagine glycosylation is found at N100, N109, and N130. A helical membrane pass occupies residues 211–231 (GFIAAFLISLLLTVAALFFLA). Topologically, residues 232–1220 (RGRCLQGGML…KKANRALGLD (989 aa)) are cytoplasmic. Coiled coils occupy residues 355 to 404 (EEYE…SAAE), 563 to 644 (KQKL…AALD), 854 to 875 (GELL…AESL), and 920 to 1005 (QILE…VREE).

In terms of assembly, component of the EvC complex composed of EFCAB7, IQCE, EVC2 and EVC; built from two subcomplexes, EVC2:EVC and EFCAB7:IQCE. Interacts with EVC. Interacts (via N-terminal end) with EFCAB7. Interacts (via N-terminal end) with IQCE. As to expression, expressed in long and cranial bones, kidney and heart. Strongly expressed in proliferating chondrocytes, osteoblasts and osteoclasts.

The protein resides in the cell membrane. Its subcellular location is the cytoplasm. It localises to the cytoskeleton. It is found in the cilium basal body. The protein localises to the cell projection. The protein resides in the cilium. Its subcellular location is the cilium membrane. It localises to the nucleus. Component of the EvC complex that positively regulates ciliary Hedgehog (Hh) signaling. Plays a critical role in bone formation and skeletal development. May be involved in early embryonic morphogenesis. This chain is Limbin (Evc2), found in Mus musculus (Mouse).